The following is a 93-amino-acid chain: MSRSLKKGPYVEGRLLERVEKMNAANEKRVLKTWSRSSTIFPQMVGHTIAVHEGRKHIPIYITEDMVGHKLGEFAPTRTYKGHAGSEKSSGLR.

It belongs to the universal ribosomal protein uS19 family.

In terms of biological role, protein S19 forms a complex with S13 that binds strongly to the 16S ribosomal RNA. The chain is Small ribosomal subunit protein uS19 from Desulfitobacterium hafniense (strain DSM 10664 / DCB-2).